The following is a 739-amino-acid chain: Ankyrin repeat and SAM domain-containing protein 6 (739 aa).

ANK repeat units lie at residues 1-30 (MGAS…FVDD), 57-86 (LEVR…DARV), 91-120 (TGWS…DPDH), 124-156 (LGNT…RPDD), 158-188 (KKRP…QVDV), 192-221 (DGAS…DVDR), 226-255 (HGWT…DVQL), and 259-290 (NGYT…LVDK). Positions 295–305 (QRGKSALRRRA) are enriched in basic residues. 2 disordered regions span residues 295-320 (QRGK…TGLK) and 449-645 (LRDA…ITDE). The segment covering 462-478 (PGRSSAGSDTASISRVV) has biased composition (polar residues). 2 stretches are compositionally biased toward low complexity: residues 490 to 506 (GPSP…HSSG) and 582 to 592 (SSRSKSTSPTL). Residues 593–603 (TPSPSPTPAHT) show a composition bias toward pro residues. Positions 604–641 (PAPAHTPAHRPTGASADSQGSASTQQRSRSSGGSSSGT) are enriched in low complexity. The 64-residue stretch at 643–706 (TDEDELSGIL…LAAISELNAG (64 aa)) folds into the SAM domain.

It is found in the cell projection. Its subcellular location is the cilium. Functionally, required for renal function. This chain is Ankyrin repeat and SAM domain-containing protein 6 (anks6), found in Danio rerio (Zebrafish).